The primary structure comprises 128 residues: Arsenic resistance transcriptional regulator ArsR1 (128 aa).

The HTH arsR-type domain maps to 11–103; sequence MREILTPPIV…AMLKGVVDAN (93 aa). Arsenite is bound by residues Cys43 and Cys45. Residues 44-67 constitute a DNA-binding region (H-T-H motif); it reads VCELTHALELSQPKISRHLAQLRE.

Homodimer.

The protein localises to the cytoplasm. Binds arsenite and regulates the expression of arsenic efflux pumps. In vitro, also binds antimony and bismuth, but not arsenate. The chain is Arsenic resistance transcriptional regulator ArsR1 from Pseudomonas putida (strain ATCC 47054 / DSM 6125 / CFBP 8728 / NCIMB 11950 / KT2440).